The chain runs to 560 residues: Proline--tRNA ligase (560 aa).

The protein belongs to the class-II aminoacyl-tRNA synthetase family. ProS type 1 subfamily. Homodimer.

The protein localises to the cytoplasm. The catalysed reaction is tRNA(Pro) + L-proline + ATP = L-prolyl-tRNA(Pro) + AMP + diphosphate. Catalyzes the attachment of proline to tRNA(Pro) in a two-step reaction: proline is first activated by ATP to form Pro-AMP and then transferred to the acceptor end of tRNA(Pro). As ProRS can inadvertently accommodate and process non-cognate amino acids such as alanine and cysteine, to avoid such errors it has two additional distinct editing activities against alanine. One activity is designated as 'pretransfer' editing and involves the tRNA(Pro)-independent hydrolysis of activated Ala-AMP. The other activity is designated 'posttransfer' editing and involves deacylation of mischarged Ala-tRNA(Pro). The misacylated Cys-tRNA(Pro) is not edited by ProRS. The chain is Proline--tRNA ligase from Vesicomyosocius okutanii subsp. Calyptogena okutanii (strain HA).